The sequence spans 413 residues: Calmodulin-binding protein CmbB (413 aa).

FNIP repeat units lie at residues 104–148 (FNHP…LSDC), 149–192 (YNQA…LGKG), 222–257 (SLPP…FGDG), 258–301 (FNQP…FHQF), 304–343 (FSQT…FSEK), and 344–386 (YNHP…LNGY).

As to quaternary structure, interacts with calmodulin in the presence of Ca(2+).

This chain is Calmodulin-binding protein CmbB, found in Dictyostelium discoideum (Social amoeba).